Here is a 191-residue protein sequence, read N- to C-terminus: 3-isopropylmalate dehydratase small subunit (191 aa).

It belongs to the LeuD family. LeuD type 1 subfamily. Heterodimer of LeuC and LeuD.

It carries out the reaction (2R,3S)-3-isopropylmalate = (2S)-2-isopropylmalate. It functions in the pathway amino-acid biosynthesis; L-leucine biosynthesis; L-leucine from 3-methyl-2-oxobutanoate: step 2/4. Catalyzes the isomerization between 2-isopropylmalate and 3-isopropylmalate, via the formation of 2-isopropylmaleate. The polypeptide is 3-isopropylmalate dehydratase small subunit (Staphylococcus haemolyticus (strain JCSC1435)).